Here is a 311-residue protein sequence, read N- to C-terminus: m7GpppX diphosphatase (311 aa).

Substrate-binding positions include Glu-159, Lys-181, and 242 to 253; that span reads HYQPSFYHLHVH. Positions 249 to 253 match the Histidine triad motif motif; sequence HLHVH. His-251 (nucleophile) is an active-site residue.

Belongs to the HIT family. In terms of tissue distribution, expressed in neurons in the ventral cord, the nerve ring and the pharynx.

The protein localises to the nucleus. The enzyme catalyses a 5'-end (N(7)-methyl 5'-triphosphoguanosine)-ribonucleoside in mRNA + H2O = N(7)-methyl-GMP + a 5'-end diphospho-ribonucleoside in mRNA + 2 H(+). It catalyses the reaction a 5'-end (N(2),N(2),N(7)-trimethyl 5'-triphosphoguanosine)-ribonucleoside in mRNA + H2O = (N(2),N(2),N(7))-trimethyl-GMP + a 5'-end diphospho-ribonucleoside in mRNA + 2 H(+). The hydrolytic product 7-methylguanosine diphosphate (m7GDP) efficiently inhibits the decapping scavenger activity and acts as a competitive inhibitor in vitro. Decapping scavenger enzyme that catalyzes the cleavage of a residual cap structure following the degradation of mRNAs of the 3'-&gt;5' exosome-mediated mRNA decay pathway. Hydrolyzes cap analog structures like 7-methylguanosine nucleoside triphosphate (m7GpppG) and tri-methyl guanosine nucleoside triphosphate (m3(2,2,7)GpppG) with up to 2 nucleotide substrates (small capped oligoribonucleotides) and specifically releases 5'-phosphorylated RNA fragments and 7-methylguanosine monophosphate (m7GMP). Does not hydrolyze unmethylated cap analog (GpppG) and shows no decapping activity on intact m7GpppG-capped mRNA molecules. Does not hydrolyze 7-methylguanosine diphosphate (m7GDP) and tri-methylguanosine diphosphate (m3(2,2,7)GDP) to m(7)GMP and m3(2,2,7)GMP, respectively. May also play a role in the 5'-&gt;3 mRNA decay pathway; m7GDP, the downstream product released by the 5'-&gt;3' mRNA mediated decapping activity, may be also converted by dcs-1 to m7GMP. Binds to m7GpppG and strongly to m7GDP. This Caenorhabditis elegans protein is m7GpppX diphosphatase (dcs-1).